The chain runs to 625 residues: Archaeosine synthase subunit alpha (625 aa).

Positions 556–624 (KYVVKIDDFV…VAVDVRHVKK (69 aa)) constitute a PUA domain.

This sequence belongs to the archaeosine synthase type 1 family. Forms a robust complex with the archaeosine synthase beta subunit RaSEA. Formation of this complex highly increases lysine transfer activity. The complex likely consists of an alpha(2)beta(2) heterotetrameric structure.

It catalyses the reaction 7-cyano-7-carbaguanosine(15) in tRNA + L-lysine = 7-N-[(5S)-5-amino-5-carboxypentyl]formamidino-7-deazaguanosine(15) in tRNA. It participates in tRNA modification; archaeosine-tRNA biosynthesis. In terms of biological role, functions in the biosynthesis of archaeosine, a modified nucleoside present in the dihydrouridine loop (D-loop) of archaeal tRNAs. Catalyzes the addition of L-lysine to the cyano group of 7-cyano-7-deazaguanine (preQ0)-modified tRNAs at position 15, to generate q0kN15-tRNA, a q0N lysine adduct identified as 7-N-[(5S)-5-amino-5-carboxypentyl]formamidino-7-deazaguanosine. The polypeptide is Archaeosine synthase subunit alpha (Methanosarcina acetivorans (strain ATCC 35395 / DSM 2834 / JCM 12185 / C2A)).